A 450-amino-acid chain; its full sequence is UPF0210 protein CPF_1748 (450 aa).

The protein belongs to the UPF0210 family. Homodimer.

The sequence is that of UPF0210 protein CPF_1748 from Clostridium perfringens (strain ATCC 13124 / DSM 756 / JCM 1290 / NCIMB 6125 / NCTC 8237 / Type A).